The following is a 567-amino-acid chain: Glucose-6-phosphate isomerase, cytosolic A (567 aa).

D-glucose 6-phosphate-binding positions include 156–157 (GS), 212–217 (SKTFTT), glutamine 356, glutamate 360, histidine 391, and lysine 516. Glutamate 360 functions as the Proton donor in the catalytic mechanism. Active-site residues include histidine 391 and lysine 516.

This sequence belongs to the GPI family. As to quaternary structure, homodimer.

The protein resides in the cytoplasm. It carries out the reaction alpha-D-glucose 6-phosphate = beta-D-fructose 6-phosphate. It functions in the pathway carbohydrate degradation; glycolysis; D-glyceraldehyde 3-phosphate and glycerone phosphate from D-glucose: step 2/4. Functionally, catalyzes the conversion of glucose-6-phosphate to fructose-6-phosphate, the second step in glycolysis, and the reverse reaction during gluconeogenesis. The polypeptide is Glucose-6-phosphate isomerase, cytosolic A (Oryza sativa subsp. japonica (Rice)).